The following is a 458-amino-acid chain: UDP-N-acetylglucosamine 1-carboxyvinyltransferase (458 aa).

Lysine 34–asparagine 35 is a binding site for phosphoenolpyruvate. A UDP-N-acetyl-alpha-D-glucosamine-binding site is contributed by arginine 104. Residue cysteine 128 is the Proton donor of the active site. The residue at position 128 (cysteine 128) is a 2-(S-cysteinyl)pyruvic acid O-phosphothioketal. UDP-N-acetyl-alpha-D-glucosamine contacts are provided by aspartate 319 and isoleucine 341.

Belongs to the EPSP synthase family. MurA subfamily.

It is found in the cytoplasm. It carries out the reaction phosphoenolpyruvate + UDP-N-acetyl-alpha-D-glucosamine = UDP-N-acetyl-3-O-(1-carboxyvinyl)-alpha-D-glucosamine + phosphate. The protein operates within cell wall biogenesis; peptidoglycan biosynthesis. Its function is as follows. Cell wall formation. Adds enolpyruvyl to UDP-N-acetylglucosamine. The sequence is that of UDP-N-acetylglucosamine 1-carboxyvinyltransferase from Prochlorococcus marinus (strain MIT 9515).